We begin with the raw amino-acid sequence, 319 residues long: Chromoplast-specific carotenoid-associated protein C2, chromoplastic (319 aa).

The transit peptide at 1 to 55 directs the protein to the chromoplast; that stretch reads MTSIAFCNAFTVNPFLAAARRSPPPLTPLTSVALSPARKPRILAIFHPRTFPSFR.

Belongs to the PAP/fibrillin family.

The protein localises to the plastid. It localises to the chromoplast. Its function is as follows. May be involved in carotenoid sequestration within chromoplasts. This Oncidium hybrid cultivar (Orchid) protein is Chromoplast-specific carotenoid-associated protein C2, chromoplastic (CHRC2).